The following is a 118-amino-acid chain: Ribonuclease P protein component (118 aa).

It belongs to the RnpA family. Consists of a catalytic RNA component (M1 or rnpB) and a protein subunit.

The enzyme catalyses Endonucleolytic cleavage of RNA, removing 5'-extranucleotides from tRNA precursor.. RNaseP catalyzes the removal of the 5'-leader sequence from pre-tRNA to produce the mature 5'-terminus. It can also cleave other RNA substrates such as 4.5S RNA. The protein component plays an auxiliary but essential role in vivo by binding to the 5'-leader sequence and broadening the substrate specificity of the ribozyme. In Shewanella denitrificans (strain OS217 / ATCC BAA-1090 / DSM 15013), this protein is Ribonuclease P protein component.